The following is a 176-amino-acid chain: T cell receptor beta constant 1 (176 aa).

In terms of domain architecture, Ig-like C1-type spans 8–117 (PEVAVFEPSE…WTQDRAKPVT (110 aa)). A disulfide bond links C30 and C95. The N-linked (GlcNAc...) asparagine glycan is linked to N69. The tract at residues 130–144 (CGFTSVSYQQGVLSA) is connecting peptide. Residues 150–170 (ILLGKATLYAVLVSALVLMAM) traverse the membrane as a helical segment. Residues 171–176 (VKRKDF) are Cytoplasmic-facing.

Alpha-beta TR is a heterodimer composed of an alpha and beta chain; disulfide-linked. The alpha-beta TR is associated with the transmembrane signaling CD3 coreceptor proteins to form the TR-CD3 (TcR or TCR). The assembly of alpha-beta TR heterodimers with CD3 occurs in the endoplasmic reticulum where a single alpha-beta TR heterodimer associates with one CD3D-CD3E heterodimer, one CD3G-CD3E heterodimer and one CD247 homodimer forming a stable octameric structure. CD3D-CD3E and CD3G-CD3E heterodimers preferentially associate with TR alpha and TR beta chains, respectively. The association of the CD247 homodimer is the last step of TcR assembly in the endoplasmic reticulum and is required for transport to the cell surface.

The protein localises to the cell membrane. In terms of biological role, constant region of T cell receptor (TR) beta chain. Alpha-beta T cell receptors are antigen specific receptors which are essential to the immune response and are present on the cell surface of T lymphocytes. Recognize peptide-major histocompatibility (MH) (pMH) complexes that are displayed by antigen presenting cells (APC), a prerequisite for efficient T cell adaptive immunity against pathogens. Binding of alpha-beta TR to pMH complex initiates TR-CD3 clustering on the cell surface and intracellular activation of LCK that phosphorylates the ITAM motifs of CD3G, CD3D, CD3E and CD247 enabling the recruitment of ZAP70. In turn, ZAP70 phosphorylates LAT, which recruits numerous signaling molecules to form the LAT signalosome. The LAT signalosome propagates signal branching to three major signaling pathways, the calcium, the mitogen-activated protein kinase (MAPK) kinase and the nuclear factor NF-kappa-B (NF-kB) pathways, leading to the mobilization of transcription factors that are critical for gene expression and essential for T cell growth and differentiation. The T cell repertoire is generated in the thymus, by V-(D)-J rearrangement. This repertoire is then shaped by intrathymic selection events to generate a peripheral T cell pool of self-MH restricted, non-autoaggressive T cells. Post-thymic interaction of alpha-beta TR with the pMH complexes shapes TR structural and functional avidity. This chain is T cell receptor beta constant 1, found in Homo sapiens (Human).